The sequence spans 37 residues: Bacteriocin lactococcin MMFII (37 aa).

Cysteine 9 and cysteine 14 are oxidised to a cystine.

Its subcellular location is the secreted. In terms of biological role, bacteriocin active against Listeria monocytogenes and Lactococcus cremoris. The protein is Bacteriocin lactococcin MMFII of Lactococcus lactis subsp. lactis (Streptococcus lactis).